We begin with the raw amino-acid sequence, 239 residues long: Peptidyl-tRNA hydrolase (239 aa).

Position 14 (Y14) interacts with tRNA. Catalysis depends on H19, which acts as the Proton acceptor. Positions 64, 66, and 112 each coordinate tRNA.

This sequence belongs to the PTH family. Monomer.

It localises to the cytoplasm. It carries out the reaction an N-acyl-L-alpha-aminoacyl-tRNA + H2O = an N-acyl-L-amino acid + a tRNA + H(+). Functionally, hydrolyzes ribosome-free peptidyl-tRNAs (with 1 or more amino acids incorporated), which drop off the ribosome during protein synthesis, or as a result of ribosome stalling. Its function is as follows. Catalyzes the release of premature peptidyl moieties from peptidyl-tRNA molecules trapped in stalled 50S ribosomal subunits, and thus maintains levels of free tRNAs and 50S ribosomes. This is Peptidyl-tRNA hydrolase from Rhizobium meliloti (strain 1021) (Ensifer meliloti).